The sequence spans 186 residues: MSIVIINNFGQYNHRISRTLKYLNIENSLIPNTTSFEEIEQMNPKGIILGGGPSIERIGNCKEIILNMDIPILGICLGHQIIADVFGGETKSAEIESYAQIELNILKENGLFKGIGDSLKVWASHKDEVVTLPENFEILANSDKCDIEAMKHEDKNIYGIQFHPEVQHTPRGGEIFENFNKICENY.

The Glutamine amidotransferase type-1 domain occupies 2 to 186 (SIVIINNFGQ…ENFNKICENY (185 aa)). Catalysis depends on C76, which acts as the Nucleophile. Residues H163 and E165 contribute to the active site.

In terms of assembly, heterodimer composed of a glutamine amidotransferase subunit (A) and a GMP-binding subunit (B).

The catalysed reaction is XMP + L-glutamine + ATP + H2O = GMP + L-glutamate + AMP + diphosphate + 2 H(+). Its pathway is purine metabolism; GMP biosynthesis; GMP from XMP (L-Gln route): step 1/1. Catalyzes the synthesis of GMP from XMP. In Methanosphaera stadtmanae (strain ATCC 43021 / DSM 3091 / JCM 11832 / MCB-3), this protein is GMP synthase [glutamine-hydrolyzing] subunit A.